Consider the following 119-residue polypeptide: Large ribosomal subunit protein uL18 (119 aa).

Belongs to the universal ribosomal protein uL18 family. In terms of assembly, part of the 50S ribosomal subunit; part of the 5S rRNA/L5/L18/L25 subcomplex. Contacts the 5S and 23S rRNAs.

This is one of the proteins that bind and probably mediate the attachment of the 5S RNA into the large ribosomal subunit, where it forms part of the central protuberance. In Chelativorans sp. (strain BNC1), this protein is Large ribosomal subunit protein uL18.